Consider the following 140-residue polypeptide: Large ribosomal subunit protein uL13 (140 aa).

This sequence belongs to the universal ribosomal protein uL13 family. Part of the 50S ribosomal subunit.

This protein is one of the early assembly proteins of the 50S ribosomal subunit, although it is not seen to bind rRNA by itself. It is important during the early stages of 50S assembly. This Sulfurimonas denitrificans (strain ATCC 33889 / DSM 1251) (Thiomicrospira denitrificans (strain ATCC 33889 / DSM 1251)) protein is Large ribosomal subunit protein uL13.